The following is a 190-amino-acid chain: GMP synthase [glutamine-hydrolyzing] subunit A (190 aa).

The Glutamine amidotransferase type-1 domain maps to T2 to N189. C76 serves as the catalytic Nucleophile. Active-site residues include H163 and E165.

As to quaternary structure, heterodimer composed of a glutamine amidotransferase subunit (A) and a GMP-binding subunit (B).

The catalysed reaction is XMP + L-glutamine + ATP + H2O = GMP + L-glutamate + AMP + diphosphate + 2 H(+). Its pathway is purine metabolism; GMP biosynthesis; GMP from XMP (L-Gln route): step 1/1. Functionally, catalyzes the synthesis of GMP from XMP. The polypeptide is GMP synthase [glutamine-hydrolyzing] subunit A (Methanobrevibacter smithii (strain ATCC 35061 / DSM 861 / OCM 144 / PS)).